We begin with the raw amino-acid sequence, 480 residues long: Immune evasion protein OPG047 (480 aa).

Residues 10 to 90 (CKNILALSMT…SYTGKVYIDS (81 aa)) form the BTB domain. A BACK domain is found at 125–223 (CVECYMMGIE…NYLSPRGINN (99 aa)). Kelch repeat units follow at residues 273 to 319 (VVYL…PANN), 320 to 363 (KLYV…SINN), 365 to 408 (IYVM…VFGR), 410 to 447 (LFLVGRNAEFYCESSNTWTLIDDPIYPRDNPELIIVDN), and 448 to 480 (KLLLIGGFYRESYIDTIEVYNHHTYSWNIWDGK).

This sequence belongs to the orthopoxvirus OPG047 family.

Might have a role in the suppression of host immune response. This Vaccinia virus (strain Western Reserve) (VACV) protein is Immune evasion protein OPG047 (OPG047).